The chain runs to 138 residues: uncharacterized protein (138 aa).

3 helical membrane passes run 17 to 37 (LIVSTIYIVLFFAILNLTVFF), 43 to 63 (INLILKNSCVVSFVVVWLLVC), and 117 to 137 (FWWMNFSLYLLGSLISIVVSL).

It is found in the cell membrane. This is an uncharacterized protein from Mycoplasma pneumoniae (strain ATCC 29342 / M129 / Subtype 1) (Mycoplasmoides pneumoniae).